The primary structure comprises 254 residues: Imidazole glycerol phosphate synthase subunit HisF (254 aa).

Catalysis depends on residues aspartate 11 and aspartate 130.

This sequence belongs to the HisA/HisF family. Heterodimer of HisH and HisF.

Its subcellular location is the cytoplasm. It catalyses the reaction 5-[(5-phospho-1-deoxy-D-ribulos-1-ylimino)methylamino]-1-(5-phospho-beta-D-ribosyl)imidazole-4-carboxamide + L-glutamine = D-erythro-1-(imidazol-4-yl)glycerol 3-phosphate + 5-amino-1-(5-phospho-beta-D-ribosyl)imidazole-4-carboxamide + L-glutamate + H(+). Its pathway is amino-acid biosynthesis; L-histidine biosynthesis; L-histidine from 5-phospho-alpha-D-ribose 1-diphosphate: step 5/9. Functionally, IGPS catalyzes the conversion of PRFAR and glutamine to IGP, AICAR and glutamate. The HisF subunit catalyzes the cyclization activity that produces IGP and AICAR from PRFAR using the ammonia provided by the HisH subunit. The sequence is that of Imidazole glycerol phosphate synthase subunit HisF from Microcystis aeruginosa (strain NIES-843 / IAM M-2473).